The primary structure comprises 451 residues: Phosphoglucosamine mutase (451 aa).

The active-site Phosphoserine intermediate is the Ser101. Positions 101, 243, 245, and 247 each coordinate Mg(2+). Ser101 is modified (phosphoserine).

The protein belongs to the phosphohexose mutase family. It depends on Mg(2+) as a cofactor. In terms of processing, activated by phosphorylation.

The catalysed reaction is alpha-D-glucosamine 1-phosphate = D-glucosamine 6-phosphate. In terms of biological role, catalyzes the conversion of glucosamine-6-phosphate to glucosamine-1-phosphate. The protein is Phosphoglucosamine mutase of Geobacter metallireducens (strain ATCC 53774 / DSM 7210 / GS-15).